A 277-amino-acid chain; its full sequence is Caspase-3 (277 aa).

Met1 is modified (N-acetylmethionine). 2 consecutive propeptides follow at residues 1–9 (MENNKTSVD) and 10–28 (SKSINNFEVKTIHGSKSVD). The residue at position 11 (Lys11) is an N6-acetyllysine. Ser26 is subject to Phosphoserine. Catalysis depends on residues His121 and Cys163. Cys163 is subject to S-nitrosocysteine; in inhibited form.

This sequence belongs to the peptidase C14A family. As to quaternary structure, heterotetramer that consists of two anti-parallel arranged heterodimers, each one formed by a 17 kDa (p17) and a 12 kDa (p12) subunit. Interacts with BIRC6/bruce. Cleavage by granzyme B, caspase-6, caspase-8 and caspase-10 generates the two active subunits. Additional processing of the propeptides is likely due to the autocatalytic activity of the activated protease. Active heterodimers between the small subunit of caspase-7 protease and the large subunit of caspase-3 also occur and vice versa. In terms of processing, S-nitrosylated on its catalytic site cysteine in unstimulated cell lines and denitrosylated upon activation of the Fas apoptotic pathway, associated with an increase in intracellular caspase activity. Fas therefore activates caspase-3 not only by inducing the cleavage of the caspase zymogen to its active subunits, but also by stimulating the denitrosylation of its active site thiol. Post-translationally, ubiquitinated by BIRC6; this activity is inhibited by DIABLO/SMAC. In terms of tissue distribution, highest expression in spleen, lung, liver, kidney and heart. Lower expression in brain, skeletal muscle and testis.

It localises to the cytoplasm. The enzyme catalyses Strict requirement for an Asp residue at positions P1 and P4. It has a preferred cleavage sequence of Asp-Xaa-Xaa-Asp-|- with a hydrophobic amino-acid residue at P2 and a hydrophilic amino-acid residue at P3, although Val or Ala are also accepted at this position.. Its activity is regulated as follows. Inhibited by BIRC6; following inhibition of BIRC6-caspase binding by DIABLO/SMAC, BIRC6 is subjected to caspase cleavage, leading to an increase in active caspases. In terms of biological role, thiol protease that acts as a major effector caspase involved in the execution phase of apoptosis. Following cleavage and activation by initiator caspases (CASP8, CASP9 and/or CASP10), mediates execution of apoptosis by catalyzing cleavage of many proteins. At the onset of apoptosis, it proteolytically cleaves poly(ADP-ribose) polymerase PARP1 at a '216-Asp-|-Gly-217' bond. Cleaves and activates sterol regulatory element binding proteins (SREBPs) between the basic helix-loop-helix leucine zipper domain and the membrane attachment domain. Cleaves and activates caspase-6, -7 and -9 (CASP6, CASP7 and CASP9, respectively). Cleaves and inactivates interleukin-18 (IL18). Triggers cell adhesion in sympathetic neurons through RET cleavage. Cleaves IL-1 beta between an Asp and an Ala, releasing the mature cytokine which is involved in a variety of inflammatory processes. Cleaves and inhibits serine/threonine-protein kinase AKT1 in response to oxidative stress. Acts as an inhibitor of type I interferon production during virus-induced apoptosis by mediating cleavage of antiviral proteins CGAS, IRF3 and MAVS, thereby preventing cytokine overproduction. Also involved in pyroptosis by mediating cleavage and activation of gasdermin-E (GSDME). Cleaves XRCC4 and phospholipid scramblase proteins XKR4, XKR8 and XKR9, leading to promote phosphatidylserine exposure on apoptotic cell surface. Cleaves BIRC6 following inhibition of BIRC6-caspase binding by DIABLO/SMAC. This chain is Caspase-3 (Casp3), found in Mus musculus (Mouse).